The following is a 629-amino-acid chain: Glycerol-3-phosphate dehydrogenase SDP6, mitochondrial (629 aa).

Residues 1-48 (MSLASIRRLAAGAAVIAAASGGAVYLSPSVASSDKGGGPILDSLRRRL) constitute a mitochondrion transit peptide. An FAD-binding site is contributed by 75-103 (DVLVIGGGATGSGVALDAVTRGLRVGLVE).

The protein belongs to the FAD-dependent glycerol-3-phosphate dehydrogenase family. FAD serves as cofactor. Expressed in germinating seedlings. Also detected in roots, leaves, flowers, developing siliques and germinating seeds.

The protein localises to the mitochondrion inner membrane. The enzyme catalyses a quinone + sn-glycerol 3-phosphate = dihydroxyacetone phosphate + a quinol. The protein operates within polyol metabolism; glycerol degradation via glycerol kinase pathway; glycerone phosphate from sn-glycerol 3-phosphate (anaerobic route): step 1/1. Required for glycerol catabolism and involved in NADH/NAD(+) homeostasis. Essential for postgerminative growth and seedling establishment. This Arabidopsis thaliana (Mouse-ear cress) protein is Glycerol-3-phosphate dehydrogenase SDP6, mitochondrial.